The following is a 327-amino-acid chain: Aspartate--ammonia ligase (327 aa).

It belongs to the class-II aminoacyl-tRNA synthetase family. AsnA subfamily.

Its subcellular location is the cytoplasm. The enzyme catalyses L-aspartate + NH4(+) + ATP = L-asparagine + AMP + diphosphate + H(+). It functions in the pathway amino-acid biosynthesis; L-asparagine biosynthesis; L-asparagine from L-aspartate (ammonia route): step 1/1. The sequence is that of Aspartate--ammonia ligase from Bacillus cereus (strain B4264).